The sequence spans 116 residues: Immunoglobulin heavy variable 2-4 (116 aa).

The N-terminal stretch at 1-19 (MAVLVLLFCLVTFPSCVLS) is a signal peptide. Residues 20-116 (QVQLKQSGPG…DDTAIYYCAK (97 aa)) form the Ig-like domain. Cysteines 41 and 114 form a disulfide.

The polypeptide is Immunoglobulin heavy variable 2-4 (Mus musculus (Mouse)).